Here is a 29-residue protein sequence, read N- to C-terminus: Toxin TdII-3 (29 aa).

The 29-residue stretch at 1–29 (KDGYLVGTDGCKYGCFTRPGHFCANEECL) folds into the LCN-type CS-alpha/beta domain.

Belongs to the long (4 C-C) scorpion toxin superfamily. Sodium channel inhibitor family. Beta subfamily. In terms of tissue distribution, expressed by the venom gland.

Its subcellular location is the secreted. Its function is as follows. Binds voltage-independently to sodium channels (Nav) and shifts the voltage of activation toward more negative potentials. This toxin is active against mammals and also affects neuromuscular preparations of frog. In Tityus discrepans (Venezuelan scorpion), this protein is Toxin TdII-3.